We begin with the raw amino-acid sequence, 224 residues long: UPF0441 protein ECA0329 (224 aa).

The tract at residues 180–224 is disordered; it reads TALAPKPATTSTITRGGFGETVAKQNSMQRSSASSNSSSSRSMGG. A compositionally biased stretch (low complexity) spans 204–224; that stretch reads QNSMQRSSASSNSSSSRSMGG.

This sequence belongs to the UPF0441 family.

The chain is UPF0441 protein ECA0329 from Pectobacterium atrosepticum (strain SCRI 1043 / ATCC BAA-672) (Erwinia carotovora subsp. atroseptica).